A 527-amino-acid chain; its full sequence is Putative zinc finger CCCH domain-containing protein 64 (527 aa).

The interval 103–127 (GQLRSTQTTSKRKAASRKGQREQRV) is disordered. The C3H1-type zinc finger occupies 213–241 (RPGEPFCRYYMKFGECKHMTFCKYNHPKD).

In Oryza sativa subsp. japonica (Rice), this protein is Putative zinc finger CCCH domain-containing protein 64.